The primary structure comprises 480 residues: Glutamate--tRNA ligase (480 aa).

The short motif at 21 to 31 is the 'HIGH' region element; that stretch reads PSPTGYLHVGG. Residues 122–146 show a composition bias toward basic and acidic residues; it reads NTQEQNKQKPRYDRHCLGDHKHSPE. The segment at 122 to 149 is disordered; that stretch reads NTQEQNKQKPRYDRHCLGDHKHSPEQPH. The 'KMSKS' region motif lies at 248–252; sequence KLSKR. Residue Lys251 coordinates ATP.

It belongs to the class-I aminoacyl-tRNA synthetase family. Glutamate--tRNA ligase type 1 subfamily. Monomer.

It is found in the cytoplasm. It catalyses the reaction tRNA(Glu) + L-glutamate + ATP = L-glutamyl-tRNA(Glu) + AMP + diphosphate. Functionally, catalyzes the attachment of glutamate to tRNA(Glu) in a two-step reaction: glutamate is first activated by ATP to form Glu-AMP and then transferred to the acceptor end of tRNA(Glu). The sequence is that of Glutamate--tRNA ligase from Pasteurella multocida (strain Pm70).